The chain runs to 215 residues: LexA repressor (215 aa).

A DNA-binding region (H-T-H motif) is located at residues 29 to 49 (VREICSAVGFKSTSTVHSYLQ). Residues S138 and K175 each act as for autocatalytic cleavage activity in the active site.

The protein belongs to the peptidase S24 family. In terms of assembly, homodimer.

It catalyses the reaction Hydrolysis of Ala-|-Gly bond in repressor LexA.. In terms of biological role, represses a number of genes involved in the response to DNA damage (SOS response), including recA and lexA. In the presence of single-stranded DNA, RecA interacts with LexA causing an autocatalytic cleavage which disrupts the DNA-binding part of LexA, leading to derepression of the SOS regulon and eventually DNA repair. This is LexA repressor from Ruminiclostridium cellulolyticum (strain ATCC 35319 / DSM 5812 / JCM 6584 / H10) (Clostridium cellulolyticum).